The primary structure comprises 542 residues: Phosphoenolpyruvate carboxykinase (ATP) (542 aa).

Residues R67, Y208, and K214 each coordinate substrate. Residues K214, H233, and 249–257 (GLSGTGKTT) contribute to the ATP site. K214 and H233 together coordinate Mn(2+). Residue D270 coordinates Mn(2+). Residues E298, R334, 450-451 (RI), and T456 contribute to the ATP site. Position 334 (R334) interacts with substrate.

This sequence belongs to the phosphoenolpyruvate carboxykinase (ATP) family. Monomer. Mn(2+) is required as a cofactor.

Its subcellular location is the cytoplasm. The catalysed reaction is oxaloacetate + ATP = phosphoenolpyruvate + ADP + CO2. The protein operates within carbohydrate biosynthesis; gluconeogenesis. Functionally, involved in the gluconeogenesis. Catalyzes the conversion of oxaloacetate (OAA) to phosphoenolpyruvate (PEP) through direct phosphoryl transfer between the nucleoside triphosphate and OAA. The chain is Phosphoenolpyruvate carboxykinase (ATP) from Vibrio vulnificus (strain CMCP6).